A 194-amino-acid polypeptide reads, in one-letter code: Ribonuclease HII (194 aa).

In terms of domain architecture, RNase H type-2 spans 3–193; the sequence is ILTAGVDEAG…VRNLLAQQAL (191 aa). A divalent metal cation is bound by residues Asp9, Glu10, and Asp101.

It belongs to the RNase HII family. Requires Mn(2+) as cofactor. Mg(2+) serves as cofactor.

It localises to the cytoplasm. The enzyme catalyses Endonucleolytic cleavage to 5'-phosphomonoester.. In terms of biological role, endonuclease that specifically degrades the RNA of RNA-DNA hybrids. The chain is Ribonuclease HII (rnhB) from Neisseria meningitidis serogroup A / serotype 4A (strain DSM 15465 / Z2491).